The sequence spans 907 residues: NADH-quinone oxidoreductase subunit G (907 aa).

Positions 1-83 (MTIIFVDNEE…GMIVSTSDKI (83 aa)) constitute a 2Fe-2S ferredoxin-type domain. [2Fe-2S] cluster is bound by residues Cys34, Cys45, Cys48, and Cys67. Positions 83 to 122 (ISRNFRKGIIELLMLNHPHDCPICEEGGSCHLQDMTVMAG) constitute a 4Fe-4S His(Cys)3-ligated-type domain. Residues His99, Cys103, Cys106, Cys112, Cys151, Cys154, Cys157, Cys201, Cys228, Cys231, Cys235, and Cys263 each contribute to the [4Fe-4S] cluster site. The region spanning 221–277 (MQYAPSICQHCCVGCNISVGEKYGKISRIENRYHNAINHYFLCDLGRFSYDYSNVDE) is the 4Fe-4S Mo/W bis-MGD-type domain.

It belongs to the complex I 75 kDa subunit family. Composed of 13 different subunits. Subunits NuoCD, E, F, and G constitute the peripheral sector of the complex. It depends on [2Fe-2S] cluster as a cofactor. Requires [4Fe-4S] cluster as cofactor.

It carries out the reaction a quinone + NADH + 5 H(+)(in) = a quinol + NAD(+) + 4 H(+)(out). NDH-1 shuttles electrons from NADH, via FMN and iron-sulfur (Fe-S) centers, to quinones in the respiratory chain. Couples the redox reaction to proton translocation (for every two electrons transferred, four hydrogen ions are translocated across the cytoplasmic membrane), and thus conserves the redox energy in a proton gradient. This chain is NADH-quinone oxidoreductase subunit G (nuoG), found in Buchnera aphidicola subsp. Baizongia pistaciae (strain Bp).